Consider the following 279-residue polypeptide: 3-methyl-2-oxobutanoate hydroxymethyltransferase 2 (279 aa).

Positions 58 and 97 each coordinate Mg(2+). Residues aspartate 58–serine 59, aspartate 97, and lysine 126 contribute to the 3-methyl-2-oxobutanoate site. Glutamate 128 provides a ligand contact to Mg(2+). Glutamate 195 serves as the catalytic Proton acceptor.

This sequence belongs to the PanB family. In terms of assembly, homodecamer; pentamer of dimers. The cofactor is Mg(2+).

The protein resides in the cytoplasm. The catalysed reaction is 3-methyl-2-oxobutanoate + (6R)-5,10-methylene-5,6,7,8-tetrahydrofolate + H2O = 2-dehydropantoate + (6S)-5,6,7,8-tetrahydrofolate. Its pathway is cofactor biosynthesis; (R)-pantothenate biosynthesis; (R)-pantoate from 3-methyl-2-oxobutanoate: step 1/2. In terms of biological role, catalyzes the reversible reaction in which hydroxymethyl group from 5,10-methylenetetrahydrofolate is transferred onto alpha-ketoisovalerate to form ketopantoate. The polypeptide is 3-methyl-2-oxobutanoate hydroxymethyltransferase 2 (Methylibium petroleiphilum (strain ATCC BAA-1232 / LMG 22953 / PM1)).